Consider the following 172-residue polypeptide: S-ribosylhomocysteine lyase (172 aa).

Fe cation is bound by residues His54, His58, and Cys128.

It belongs to the LuxS family. In terms of assembly, homodimer. Fe cation is required as a cofactor.

The enzyme catalyses S-(5-deoxy-D-ribos-5-yl)-L-homocysteine = (S)-4,5-dihydroxypentane-2,3-dione + L-homocysteine. Functionally, involved in the synthesis of autoinducer 2 (AI-2) which is secreted by bacteria and is used to communicate both the cell density and the metabolic potential of the environment. The regulation of gene expression in response to changes in cell density is called quorum sensing. Catalyzes the transformation of S-ribosylhomocysteine (RHC) to homocysteine (HC) and 4,5-dihydroxy-2,3-pentadione (DPD). The chain is S-ribosylhomocysteine lyase from Vibrio atlanticus (strain LGP32) (Vibrio splendidus (strain Mel32)).